Here is an 89-residue protein sequence, read N- to C-terminus: Small ribosomal subunit protein bS16c (89 aa).

Belongs to the bacterial ribosomal protein bS16 family.

It localises to the plastid. Its subcellular location is the chloroplast. The sequence is that of Small ribosomal subunit protein bS16c from Glycine max (Soybean).